A 109-amino-acid chain; its full sequence is U4-lycotoxin-Ls1b (109 aa).

Positions 1 to 22 (MKVLVLFSVLFLTLFSYSSTEA) are cleaved as a signal peptide. Positions 23–44 (IDEFDSDAEDDMLSLMANEQVR) are excised as a propeptide. The knottin domain stretch occupies residues 45-88 (AKACTPRLHDCSHDRHSCCRGELSKDVCYCFYPEGEDKTEVCSC). 4 cysteine pairs are disulfide-bonded: C48/C63, C55/C72, C62/C88, and C74/C86. A linear cationic cytotoxin domain region spans residues 89–108 (QQPKSHKYIEKVVDKAKTVV).

This sequence belongs to the neurotoxin 19 (CSTX) family. 05 (U4-Lctx) subfamily. Expressed by the venom gland.

The protein resides in the secreted. In terms of biological role, enhances the high-affinity desensitization of human P2RX3 purinoceptors. The sequence is that of U4-lycotoxin-Ls1b from Lycosa singoriensis (Wolf spider).